The primary structure comprises 490 residues: Katanin p60 ATPase-containing subunit A-like 1 (490 aa).

Methionine 1 carries the post-translational modification N-acetylmethionine. A disordered region spans residues 95 to 184 (DPAVWPPPVP…DGEMPKFDGA (90 aa)). Positions 116–127 (PNREVRPLRKEM) are enriched in basic and acidic residues. Over residues 128–139 (AGVGARGPVGRA) the composition is skewed to low complexity. The span at 143–169 (SKSEKPSTSRDKDCRARGRDDKGRKNM) shows a compositional bias: basic and acidic residues. At serine 174 the chain carries Phosphoserine. 248-255 (GPPGTGKT) lines the ATP pocket.

It belongs to the AAA ATPase family. Katanin p60 subunit A1 subfamily. A-like 1 sub-subfamily. Interacts with KATNB1 and KATNBL1.

It is found in the cytoplasm. Its subcellular location is the cytoskeleton. The protein resides in the spindle pole. The protein localises to the spindle. The catalysed reaction is n ATP + n H2O + a microtubule = n ADP + n phosphate + (n+1) alpha/beta tubulin heterodimers.. Functionally, regulates microtubule dynamics in Sertoli cells, a process that is essential for spermiogenesis and male fertility. Severs microtubules in an ATP-dependent manner, promoting rapid reorganization of cellular microtubule arrays. Has microtubule-severing activity in vitro. In Papio anubis (Olive baboon), this protein is Katanin p60 ATPase-containing subunit A-like 1.